Reading from the N-terminus, the 528-residue chain is tRNA-2-methylthio-N(6)-dimethylallyladenosine synthase (528 aa).

In terms of domain architecture, MTTase N-terminal spans 19 to 134 (RTYEVRTYGC…LPTLLERARH (116 aa)). Residues cysteine 28, cysteine 63, cysteine 97, cysteine 171, cysteine 175, and cysteine 178 each coordinate [4Fe-4S] cluster. The Radical SAM core domain occupies 157–387 (RDEIASGWVS…TALQERISHE (231 aa)). Residues 390–460 (QRVVGRTVEV…PFHLIADSVD (71 aa)) form the TRAM domain.

It belongs to the methylthiotransferase family. MiaB subfamily. In terms of assembly, monomer. [4Fe-4S] cluster serves as cofactor.

It is found in the cytoplasm. The enzyme catalyses N(6)-dimethylallyladenosine(37) in tRNA + (sulfur carrier)-SH + AH2 + 2 S-adenosyl-L-methionine = 2-methylsulfanyl-N(6)-dimethylallyladenosine(37) in tRNA + (sulfur carrier)-H + 5'-deoxyadenosine + L-methionine + A + S-adenosyl-L-homocysteine + 2 H(+). Catalyzes the methylthiolation of N6-(dimethylallyl)adenosine (i(6)A), leading to the formation of 2-methylthio-N6-(dimethylallyl)adenosine (ms(2)i(6)A) at position 37 in tRNAs that read codons beginning with uridine. The chain is tRNA-2-methylthio-N(6)-dimethylallyladenosine synthase from Clavibacter michiganensis subsp. michiganensis (strain NCPPB 382).